Here is a 331-residue protein sequence, read N- to C-terminus: Lipoyl synthase (331 aa).

The disordered stretch occupies residues 1–33 (MSDALIATSSEAPQSPAEQYDPTRKQKSADKTA). Over residues 7 to 17 (ATSSEAPQSPA) the composition is skewed to polar residues. Over residues 21–33 (DPTRKQKSADKTA) the composition is skewed to basic and acidic residues. 7 residues coordinate [4Fe-4S] cluster: C78, C83, C89, C104, C108, C111, and S318. The Radical SAM core domain occupies 89–307 (CFGKGTATFM…EEEAYKMGFT (219 aa)).

This sequence belongs to the radical SAM superfamily. Lipoyl synthase family. [4Fe-4S] cluster is required as a cofactor.

The protein localises to the cytoplasm. The catalysed reaction is [[Fe-S] cluster scaffold protein carrying a second [4Fe-4S](2+) cluster] + N(6)-octanoyl-L-lysyl-[protein] + 2 oxidized [2Fe-2S]-[ferredoxin] + 2 S-adenosyl-L-methionine + 4 H(+) = [[Fe-S] cluster scaffold protein] + N(6)-[(R)-dihydrolipoyl]-L-lysyl-[protein] + 4 Fe(3+) + 2 hydrogen sulfide + 2 5'-deoxyadenosine + 2 L-methionine + 2 reduced [2Fe-2S]-[ferredoxin]. The protein operates within protein modification; protein lipoylation via endogenous pathway; protein N(6)-(lipoyl)lysine from octanoyl-[acyl-carrier-protein]: step 2/2. Catalyzes the radical-mediated insertion of two sulfur atoms into the C-6 and C-8 positions of the octanoyl moiety bound to the lipoyl domains of lipoate-dependent enzymes, thereby converting the octanoylated domains into lipoylated derivatives. This chain is Lipoyl synthase, found in Cupriavidus necator (strain ATCC 17699 / DSM 428 / KCTC 22496 / NCIMB 10442 / H16 / Stanier 337) (Ralstonia eutropha).